Consider the following 625-residue polypeptide: Adenine deaminase 2 (625 aa).

Belongs to the metallo-dependent hydrolases superfamily. Adenine deaminase family. The cofactor is Mn(2+).

The catalysed reaction is adenine + H2O + H(+) = hypoxanthine + NH4(+). This is Adenine deaminase 2 from Bradyrhizobium diazoefficiens (strain JCM 10833 / BCRC 13528 / IAM 13628 / NBRC 14792 / USDA 110).